The primary structure comprises 381 residues: Endophilin-A homolog (381 aa).

Positions 1–21 are membrane-binding amphipathic helix; it reads MSLSGLRKQFNKANQYLSETM. In terms of domain architecture, BAR spans 18 to 247; sequence SETMGAAEPT…LGHRIKDAAA (230 aa). A coiled-coil region spans residues 170–238; that stretch reads CKKRQQRRDD…QCLENLQQQL (69 aa). A disordered region spans residues 246–323; that stretch reads AARPREEHVP…PPPLSQQQKP (78 aa). The span at 260-271 shows a compositional bias: polar residues; sequence ANESRTPRSSFR. Pro residues predominate over residues 305–317; sequence YQGPPPGGLPPPL. One can recognise an SH3 domain in the interval 320–379; it reads QQKPQCRALFDFDAQSEGELDFKEGTLIELVSQIDENWYEGRVNGKTGLFPVTYVQVLVP.

Belongs to the endophilin family. As to quaternary structure, may form a homodimer (via the BAR domain). As to expression, expressed in neurons and posterior intestine.

The protein localises to the synapse. It is found in the cytoplasmic vesicle. The protein resides in the secretory vesicle. It localises to the synaptic vesicle. Its subcellular location is the membrane. Its function is as follows. Involved in synaptic vesicle (SV) recycling in neurons probably by regulating clathrin-mediated endocytosis. By controlling SV endocytosis, regulates the rate of excitatory postsynaptic currents (EPSCs) at neuromuscular junctions and thus locomotion. In a similar manner, involved in necrotic neuronal cell death induced by abnormal hyperactivation of ion channels. Plays a minor role in responses to mechanical stimuli. Plays a minor role in unc-26/synaptojanin localization to synapses. In Caenorhabditis elegans, this protein is Endophilin-A homolog.